The following is a 109-amino-acid chain: uncharacterized protein (109 aa).

The helical transmembrane segment at 63–85 (LFVKTFFACTYIIMLAFQVYIFL) threads the bilayer.

It localises to the membrane. This is an uncharacterized protein from Saccharomyces cerevisiae (strain ATCC 204508 / S288c) (Baker's yeast).